The chain runs to 349 residues: Phosphate acyltransferase (349 aa).

The protein belongs to the PlsX family. Homodimer. Probably interacts with PlsY.

Its subcellular location is the cytoplasm. The enzyme catalyses a fatty acyl-[ACP] + phosphate = an acyl phosphate + holo-[ACP]. It participates in lipid metabolism; phospholipid metabolism. In terms of biological role, catalyzes the reversible formation of acyl-phosphate (acyl-PO(4)) from acyl-[acyl-carrier-protein] (acyl-ACP). This enzyme utilizes acyl-ACP as fatty acyl donor, but not acyl-CoA. This is Phosphate acyltransferase from Albidiferax ferrireducens (strain ATCC BAA-621 / DSM 15236 / T118) (Rhodoferax ferrireducens).